The primary structure comprises 423 residues: Histidine--tRNA ligase (423 aa).

It belongs to the class-II aminoacyl-tRNA synthetase family. In terms of assembly, homodimer.

The protein resides in the cytoplasm. It carries out the reaction tRNA(His) + L-histidine + ATP = L-histidyl-tRNA(His) + AMP + diphosphate + H(+). The chain is Histidine--tRNA ligase from Phytoplasma mali (strain AT).